We begin with the raw amino-acid sequence, 111 residues long: Histone H2A-Bbd type 1 (111 aa).

Belongs to the histone H2A family. In terms of assembly, the nucleosome is a histone octamer containing two molecules each of H2A, H2B, H3 and H4 assembled in one H3-H4 heterotetramer and two H2A-H2B heterodimers. Incorporated into nucleosomes during late spermatogenesis. Interacts with H2BC1/TH2B; preferentially dimerizes with H2BC1/TH2B to form nucleosomes. As to expression, highly expressed in adult testis, mainly in spermatocytes.

The protein resides in the nucleus. Its subcellular location is the chromosome. Functionally, atypical histone H2A which replaces conventional H2A during late spermatogenesis and is involved in the replacement of histones to protamine in male germ cells. Core component of nucleosome: nucleosomes wrap and compact DNA into chromatin, limiting DNA accessibility to the cellular machineries which require DNA as a template. Nucleosomes containing H2AB1 only wrap 130 bp of DNA, compared to 147 bp for classical nucleosomes. In condensing spermatids, the heterodimer between H2AB1 and H2BC1/TH2B is loaded onto the nucleosomes and promotes loading of transition proteins (TNP1 and TNP2) onto the nucleosomes. Inclusion of the H2AB1-H2BC1/TH2B dimer into chromatin opens the nucleosomes, releasing the nucleosomal DNA ends and allowing the invasion of nucleosomes by transition proteins (TNP1 and TNP2). Then, transition proteins drive the recruitment and processing of protamines, which are responsible for histone eviction. In Mus musculus (Mouse), this protein is Histone H2A-Bbd type 1 (H2ab1).